Reading from the N-terminus, the 75-residue chain is Putative primary metabolism protein HVA1 (75 aa).

Residues 1 to 13 (MSVQDKQGQNINV) show a composition bias toward polar residues. Disordered regions lie at residues 1-24 (MSVQDKQGQNINVGDTVYTPYRGG) and 40-75 (AAEKGVKNPPKVLFTDQNNKDVAHNPGTLTDLDKQK).

Its function is as follows. May play a role in primary metabolism. The sequence is that of Putative primary metabolism protein HVA1 from Cryptococcus neoformans var. grubii serotype A (strain H99 / ATCC 208821 / CBS 10515 / FGSC 9487) (Filobasidiella neoformans var. grubii).